A 386-amino-acid chain; its full sequence is F420 non-reducing hydrogenase II small subunit (386 aa).

A signal peptide (tat-type signal) is located at residues 1–51; the sequence is MVEMSTGMKNLTRTLESMDFLKMDRRTFMKAVSALGATAFLGTYQTEIVNA. [4Fe-4S] cluster contacts are provided by cysteine 67, cysteine 70, cysteine 178, cysteine 227, histidine 273, cysteine 276, cysteine 296, and cysteine 302. Residues cysteine 311, cysteine 330, and cysteine 333 each contribute to the [3Fe-4S] cluster site.

Belongs to the [NiFe]/[NiFeSe] hydrogenase small subunit family. Composed of a large subunit (VhtA), a small subunit (VhtG) and a cytochrome subunit (VhtC). [4Fe-4S] cluster serves as cofactor. [3Fe-4S] cluster is required as a cofactor. Predicted to be exported by the Tat system. The position of the signal peptide cleavage has not been experimentally proven.

It is found in the cell membrane. It carries out the reaction methanophenazine + H2 = dihydromethanophenazine. In terms of biological role, part of the F420 non-reducing hydrogenase II complex that catalyzes the reduction of methanophenazine to dihydromethanophenazine. This chain is F420 non-reducing hydrogenase II small subunit, found in Methanosarcina mazei (strain ATCC BAA-159 / DSM 3647 / Goe1 / Go1 / JCM 11833 / OCM 88) (Methanosarcina frisia).